A 66-amino-acid chain; its full sequence is Large ribosomal subunit protein uL29 (66 aa).

It belongs to the universal ribosomal protein uL29 family.

This chain is Large ribosomal subunit protein uL29, found in Mesorhizobium japonicum (strain LMG 29417 / CECT 9101 / MAFF 303099) (Mesorhizobium loti (strain MAFF 303099)).